The primary structure comprises 35 residues: Cupiennin-1b (35 aa).

Glu-35 carries the glutamic acid 1-amide modification.

The protein belongs to the cationic peptide 04 (cupiennin) family. 01 subfamily. As to expression, expressed by the venom gland.

It localises to the secreted. Has antimicrobial activity against E.coli, E.faecalis, P.aeruginosa, and S.aureus. Has insecticidal and hemolytic activities. Probably acts by disturbing membrane function with its amphipathic structure. The sequence is that of Cupiennin-1b from Cupiennius salei (American wandering spider).